Here is a 296-residue protein sequence, read N- to C-terminus: uncharacterized protein (296 aa).

This is an uncharacterized protein from Magallana gigas (Pacific oyster).